The chain runs to 321 residues: Glutamyl-Q tRNA(Asp) synthetase (321 aa).

L-glutamate is bound by residues 25 to 29 and Glu61; that span reads RFAPS. The 'HIGH' region motif lies at 28 to 38; it reads PSPSGDLHFGS. Residues Cys117, Cys119, Tyr131, and Cys135 each contribute to the Zn(2+) site. Positions 188 and 206 each coordinate L-glutamate. The 'KMSKS' region motif lies at 244-248; that stretch reads KLSKQ. Residue Lys247 participates in ATP binding.

This sequence belongs to the class-I aminoacyl-tRNA synthetase family. GluQ subfamily. Zn(2+) is required as a cofactor.

In terms of biological role, catalyzes the tRNA-independent activation of glutamate in presence of ATP and the subsequent transfer of glutamate onto a tRNA(Asp). Glutamate is transferred on the 2-amino-5-(4,5-dihydroxy-2-cyclopenten-1-yl) moiety of the queuosine in the wobble position of the QUC anticodon. This is Glutamyl-Q tRNA(Asp) synthetase from Yersinia pestis.